Consider the following 207-residue polypeptide: Dephospho-CoA kinase (207 aa).

The DPCK domain occupies 8–207 (AIALTGSIGS…LPCVDCVQSS (200 aa)). Residue 16-21 (GSGKST) participates in ATP binding.

Belongs to the CoaE family.

Its subcellular location is the cytoplasm. The catalysed reaction is 3'-dephospho-CoA + ATP = ADP + CoA + H(+). Its pathway is cofactor biosynthesis; coenzyme A biosynthesis; CoA from (R)-pantothenate: step 5/5. In terms of biological role, catalyzes the phosphorylation of the 3'-hydroxyl group of dephosphocoenzyme A to form coenzyme A. This is Dephospho-CoA kinase from Helicobacter hepaticus (strain ATCC 51449 / 3B1).